The sequence spans 36 residues: Photosystem I reaction center subunit VIII (36 aa).

The chain crosses the membrane as a helical span at residues 9–29; sequence ILVPLVGLVFPAVTMASLFLY.

It belongs to the PsaI family.

The protein localises to the plastid. Its subcellular location is the chloroplast thylakoid membrane. Functionally, may help in the organization of the PsaL subunit. The sequence is that of Photosystem I reaction center subunit VIII from Staurastrum punctulatum (Green alga).